A 361-amino-acid polypeptide reads, in one-letter code: tRNA 2-selenouridine synthase (361 aa).

One can recognise a Rhodanese domain in the interval A11 to E134. The active-site S-selanylcysteine intermediate is the C94.

It belongs to the SelU family. In terms of assembly, monomer.

It carries out the reaction 5-methylaminomethyl-2-thiouridine(34) in tRNA + selenophosphate + (2E)-geranyl diphosphate + H2O + H(+) = 5-methylaminomethyl-2-selenouridine(34) in tRNA + (2E)-thiogeraniol + phosphate + diphosphate. The enzyme catalyses 5-methylaminomethyl-2-thiouridine(34) in tRNA + (2E)-geranyl diphosphate = 5-methylaminomethyl-S-(2E)-geranyl-thiouridine(34) in tRNA + diphosphate. It catalyses the reaction 5-methylaminomethyl-S-(2E)-geranyl-thiouridine(34) in tRNA + selenophosphate + H(+) = 5-methylaminomethyl-2-(Se-phospho)selenouridine(34) in tRNA + (2E)-thiogeraniol. The catalysed reaction is 5-methylaminomethyl-2-(Se-phospho)selenouridine(34) in tRNA + H2O = 5-methylaminomethyl-2-selenouridine(34) in tRNA + phosphate. Functionally, involved in the post-transcriptional modification of the uridine at the wobble position (U34) of tRNA(Lys), tRNA(Glu) and tRNA(Gln). Catalyzes the conversion of 2-thiouridine (S2U-RNA) to 2-selenouridine (Se2U-RNA). Acts in a two-step process involving geranylation of 2-thiouridine (S2U) to S-geranyl-2-thiouridine (geS2U) and subsequent selenation of the latter derivative to 2-selenouridine (Se2U) in the tRNA chain. The sequence is that of tRNA 2-selenouridine synthase from Chromohalobacter salexigens (strain ATCC BAA-138 / DSM 3043 / CIP 106854 / NCIMB 13768 / 1H11).